A 568-amino-acid polypeptide reads, in one-letter code: Cyclin-dependent kinase-like 2 (568 aa).

Residues 4 to 289 (YENLGLVGEG…CADLLRHDFF (286 aa)) form the Protein kinase domain. ATP contacts are provided by residues 10–18 (VGEGSYGMV) and lysine 33. The [NKR]KIAxRE motif lies at 45-51 (KKIAMRE). The active-site Proton acceptor is the aspartate 126. Disordered regions lie at residues 309–333 (DARN…LGEE) and 545–568 (SHQG…EHQH). Basic and acidic residues predominate over residues 322–333 (RKKEKDDALGEE).

It belongs to the protein kinase superfamily. CMGC Ser/Thr protein kinase family. CDC2/CDKX subfamily. In terms of tissue distribution, expressed in testis, kidney, lung and brain.

It localises to the cytoplasm. It is found in the nucleus. The catalysed reaction is L-seryl-[protein] + ATP = O-phospho-L-seryl-[protein] + ADP + H(+). It carries out the reaction L-threonyl-[protein] + ATP = O-phospho-L-threonyl-[protein] + ADP + H(+). The sequence is that of Cyclin-dependent kinase-like 2 from Mus musculus (Mouse).